A 318-amino-acid polypeptide reads, in one-letter code: Probable endolytic peptidoglycan transglycosylase RlpA (318 aa).

A signal peptide spans M1–A21. The segment at D121–A191 is disordered. The segment covering H125 to P137 has biased composition (polar residues).

This sequence belongs to the RlpA family.

Lytic transglycosylase with a strong preference for naked glycan strands that lack stem peptides. The protein is Probable endolytic peptidoglycan transglycosylase RlpA of Treponema pallidum (strain Nichols).